The chain runs to 291 residues: Ribose-phosphate pyrophosphokinase (291 aa).

ATP is bound by residues 34–36 (DGE) and 93–94 (RQ). Mg(2+) is bound by residues histidine 127 and aspartate 165. Residue lysine 188 is part of the active site. D-ribose 5-phosphate-binding positions include arginine 190, aspartate 216, and 220 to 224 (STGGT).

It belongs to the ribose-phosphate pyrophosphokinase family. Class III (archaeal) subfamily. It depends on Mg(2+) as a cofactor.

It is found in the cytoplasm. It carries out the reaction D-ribose 5-phosphate + ATP = 5-phospho-alpha-D-ribose 1-diphosphate + AMP + H(+). It functions in the pathway metabolic intermediate biosynthesis; 5-phospho-alpha-D-ribose 1-diphosphate biosynthesis; 5-phospho-alpha-D-ribose 1-diphosphate from D-ribose 5-phosphate (route I): step 1/1. Functionally, involved in the biosynthesis of the central metabolite phospho-alpha-D-ribosyl-1-pyrophosphate (PRPP) via the transfer of pyrophosphoryl group from ATP to 1-hydroxyl of ribose-5-phosphate (Rib-5-P). This chain is Ribose-phosphate pyrophosphokinase, found in Sulfurisphaera tokodaii (strain DSM 16993 / JCM 10545 / NBRC 100140 / 7) (Sulfolobus tokodaii).